The following is a 466-amino-acid chain: MTPSALKKTVLLLGTAFAAASVHASGYHFGTQSVNAQSTANAAAAEAADASTIFYNPAGLTKLDSSQISVNANIVLPSIHYEADSATDFTGLPVQGSKSGKITKTTVAPHIYGAYKVNDNLTVGLGVYVPFGSATEYEKDSVLRHNINKLGLTSIAVEPVAAWKLNDRHSFGAGIIAQHTSAELRKYADWGIKSKAEILTAKPPKPNGVAEAAKIQADGHADVKGSDWGFGYQLAWMWDINDRARVGVNYRSKVSHTLKGDAEWAADGAAAKAMWSTMLAANGYTANEKARVKIVTPESLSVHGMYKVSDKADLFGDVTWTRHSRFDKAELVFEKEKTVVKGKSDRTTITPNWRNTYKVGFGGSYQISEPLQLRAGIAFDKSPVRNADYRMNSLPDGNRIWFSAGMKYHIGKNHVVDAAYTHIHINDTSYRTAKASGNDVDSKGASSARFKNHADIIGLQYTYKFK.

Residues 1–24 (MTPSALKKTVLLLGTAFAAASVHA) form the signal peptide.

Belongs to the OmpP1/FadL family.

Its subcellular location is the cell outer membrane. In Neisseria meningitidis serogroup B (strain ATCC BAA-335 / MC58), this protein is Putative outer membrane protein NMB0088.